We begin with the raw amino-acid sequence, 284 residues long: Lipoyl synthase (284 aa).

Positions 34, 39, 45, 60, 64, 67, and 272 each coordinate [4Fe-4S] cluster. In terms of domain architecture, Radical SAM core spans 46–261 (FARRTATFMI…EEIGYKLGFK (216 aa)).

It belongs to the radical SAM superfamily. Lipoyl synthase family. [4Fe-4S] cluster serves as cofactor.

Its subcellular location is the cytoplasm. The enzyme catalyses [[Fe-S] cluster scaffold protein carrying a second [4Fe-4S](2+) cluster] + N(6)-octanoyl-L-lysyl-[protein] + 2 oxidized [2Fe-2S]-[ferredoxin] + 2 S-adenosyl-L-methionine + 4 H(+) = [[Fe-S] cluster scaffold protein] + N(6)-[(R)-dihydrolipoyl]-L-lysyl-[protein] + 4 Fe(3+) + 2 hydrogen sulfide + 2 5'-deoxyadenosine + 2 L-methionine + 2 reduced [2Fe-2S]-[ferredoxin]. The protein operates within protein modification; protein lipoylation via endogenous pathway; protein N(6)-(lipoyl)lysine from octanoyl-[acyl-carrier-protein]: step 2/2. Functionally, catalyzes the radical-mediated insertion of two sulfur atoms into the C-6 and C-8 positions of the octanoyl moiety bound to the lipoyl domains of lipoate-dependent enzymes, thereby converting the octanoylated domains into lipoylated derivatives. The protein is Lipoyl synthase of Caldanaerobacter subterraneus subsp. tengcongensis (strain DSM 15242 / JCM 11007 / NBRC 100824 / MB4) (Thermoanaerobacter tengcongensis).